A 379-amino-acid chain; its full sequence is Cytochrome b (379 aa).

4 consecutive transmembrane segments (helical) span residues 33-53 (FGSL…FLAM), 77-98 (WTIR…FIHV), 113-133 (WNVG…GYVL), and 178-198 (FFAL…IHLL). Heme b-binding residues include histidine 83 and histidine 97. Heme b is bound by residues histidine 182 and histidine 196. Histidine 201 serves as a coordination point for a ubiquinone. The next 4 membrane-spanning stretches (helical) occupy residues 226 to 246 (TKDF…ALFY), 288 to 308 (LGGV…PFLQ), 320 to 340 (LSQF…WIGG), and 347 to 367 (FINI…FIMP).

Belongs to the cytochrome b family. As to quaternary structure, the cytochrome bc1 complex contains 11 subunits: 3 respiratory subunits (MT-CYB, CYC1 and UQCRFS1), 2 core proteins (UQCRC1 and UQCRC2) and 6 low-molecular weight proteins (UQCRH/QCR6, UQCRB/QCR7, UQCRQ/QCR8, UQCR10/QCR9, UQCR11/QCR10 and a cleavage product of UQCRFS1). This cytochrome bc1 complex then forms a dimer. Heme b is required as a cofactor.

It is found in the mitochondrion inner membrane. Component of the ubiquinol-cytochrome c reductase complex (complex III or cytochrome b-c1 complex) that is part of the mitochondrial respiratory chain. The b-c1 complex mediates electron transfer from ubiquinol to cytochrome c. Contributes to the generation of a proton gradient across the mitochondrial membrane that is then used for ATP synthesis. This chain is Cytochrome b (MT-CYB), found in Lepilemur dorsalis (Grey-backed sportive lemur).